Here is a 363-residue protein sequence, read N- to C-terminus: Protein RecA (363 aa).

G79–T86 lines the ATP pocket.

Belongs to the RecA family.

It localises to the cytoplasm. In terms of biological role, can catalyze the hydrolysis of ATP in the presence of single-stranded DNA, the ATP-dependent uptake of single-stranded DNA by duplex DNA, and the ATP-dependent hybridization of homologous single-stranded DNAs. It interacts with LexA causing its activation and leading to its autocatalytic cleavage. This chain is Protein RecA, found in Borrelia turicatae (strain 91E135).